Here is a 201-residue protein sequence, read N- to C-terminus: 3-isopropylmalate dehydratase small subunit (201 aa).

Belongs to the LeuD family. LeuD type 1 subfamily. In terms of assembly, heterodimer of LeuC and LeuD.

The catalysed reaction is (2R,3S)-3-isopropylmalate = (2S)-2-isopropylmalate. The protein operates within amino-acid biosynthesis; L-leucine biosynthesis; L-leucine from 3-methyl-2-oxobutanoate: step 2/4. Catalyzes the isomerization between 2-isopropylmalate and 3-isopropylmalate, via the formation of 2-isopropylmaleate. This Erwinia tasmaniensis (strain DSM 17950 / CFBP 7177 / CIP 109463 / NCPPB 4357 / Et1/99) protein is 3-isopropylmalate dehydratase small subunit.